We begin with the raw amino-acid sequence, 78 residues long: DNA-directed RNA polymerase subunit Rpo5 (78 aa).

The protein belongs to the archaeal Rpo5/eukaryotic RPB5 RNA polymerase subunit family. As to quaternary structure, part of the RNA polymerase complex.

It localises to the cytoplasm. The catalysed reaction is RNA(n) + a ribonucleoside 5'-triphosphate = RNA(n+1) + diphosphate. DNA-dependent RNA polymerase (RNAP) catalyzes the transcription of DNA into RNA using the four ribonucleoside triphosphates as substrates. The sequence is that of DNA-directed RNA polymerase subunit Rpo5 from Methanococcus vannielii (strain ATCC 35089 / DSM 1224 / JCM 13029 / OCM 148 / SB).